The sequence spans 253 residues: Bridging integrator 3 (253 aa).

A BAR domain is found at 9–232; it reads GQPKKQIVPK…LDQPGHSDEQ (224 aa). 3 coiled-coil regions span residues 18–51, 120–152, and 231–247; these read KTVE…STDA, SLNM…EKTG, and EQRE…LRAL. The segment at 220–240 is disordered; the sequence is SHQLDQPGHSDEQRERENEAK. A compositionally biased stretch (basic and acidic residues) spans 227–240; sequence GHSDEQRERENEAK.

As to expression, ubiquitously expressed except in brain.

The protein localises to the cytoplasm. Its subcellular location is the cytoskeleton. Functionally, involved in cytokinesis and septation where it has a role in the localization of F-actin. The chain is Bridging integrator 3 (BIN3) from Homo sapiens (Human).